The following is a 72-amino-acid chain: Large ribosomal subunit protein bL31 (72 aa).

4 residues coordinate Zn(2+): cysteine 16, cysteine 18, cysteine 38, and cysteine 41.

The protein belongs to the bacterial ribosomal protein bL31 family. Type A subfamily. As to quaternary structure, part of the 50S ribosomal subunit. Requires Zn(2+) as cofactor.

Functionally, binds the 23S rRNA. The protein is Large ribosomal subunit protein bL31 of Aliivibrio salmonicida (strain LFI1238) (Vibrio salmonicida (strain LFI1238)).